We begin with the raw amino-acid sequence, 531 residues long: GMP synthase [glutamine-hydrolyzing] (531 aa).

One can recognise a Glutamine amidotransferase type-1 domain in the interval 20 to 213 (KILIVDFGSQ…VRKVAGLKGD (194 aa)). The active-site Nucleophile is cysteine 97. Active-site residues include histidine 187 and glutamate 189. Residues 214–406 (WTMRAFREEA…LGLPDVFVGR (193 aa)) form the GMPS ATP-PPase domain. Residue 241–247 (SGGVDSA) coordinates ATP.

Homodimer.

It carries out the reaction XMP + L-glutamine + ATP + H2O = GMP + L-glutamate + AMP + diphosphate + 2 H(+). Its pathway is purine metabolism; GMP biosynthesis; GMP from XMP (L-Gln route): step 1/1. Catalyzes the synthesis of GMP from XMP. This is GMP synthase [glutamine-hydrolyzing] from Afipia carboxidovorans (strain ATCC 49405 / DSM 1227 / KCTC 32145 / OM5) (Oligotropha carboxidovorans).